We begin with the raw amino-acid sequence, 668 residues long: Trehalase (668 aa).

Positions 1–23 are disordered; the sequence is MVLQQTEPTDGADRKASDGPLTV.

This sequence belongs to the glycosyl hydrolase 15 family. Homomultimer of 20 or more subunits. The cofactor is Mg(2+). It depends on phosphate as a cofactor.

The catalysed reaction is alpha,alpha-trehalose + H2O = alpha-D-glucose + beta-D-glucose. It participates in glycan degradation; trehalose degradation; D-glucose from alpha,alpha-trehalose: step 1/1. Its activity is regulated as follows. Inhibited by pyrophosphate and polyphosphates. Also competitively inhibited by validoxylamine and castanospermine, but not by trehazolin. In terms of biological role, catalyzes the hydrolysis of alpha,alpha-trehalose into two molecules of D-glucose. Does not hydrolyze maltose, isomaltose, sucrose, cellobiose, p-nitrophenyl-alpha-D-glucopyranoside, and methyl-alpha-D-glucopyranoside. Is also inactive on alpha,beta-trehalose, beta,beta-trehalose, alpha,alpha-trehalose-6,6'-dibehenate, trehalulose, nigerose, and trehalose dimycolate. The chain is Trehalase from Mycolicibacterium smegmatis (strain ATCC 700084 / mc(2)155) (Mycobacterium smegmatis).